Consider the following 43-residue polypeptide: Holotricin-1 (43 aa).

3 cysteine pairs are disulfide-bonded: Cys-3–Cys-34, Cys-20–Cys-39, and Cys-24–Cys-41.

It belongs to the invertebrate defensin family. Type 1 subfamily. Hemolymph.

It localises to the secreted. Shows potent antibacterial activity against Gram-positive bacteria. This chain is Holotricin-1, found in Holotrichia diomphalia (Korean black chafer).